A 713-amino-acid polypeptide reads, in one-letter code: Polyribonucleotide nucleotidyltransferase (713 aa).

The Mg(2+) site is built by Asp-487 and Asp-493. One can recognise a KH domain in the interval 554–613 (PRIEVMNIPVDKIREVIGSGGKVIREIVEKTGAKINIEDDGTVKIASASGKEIEAARKWI). One can recognise an S1 motif domain in the interval 623-691 (GQIYEGTVVK…ERGKVRLSMK (69 aa)).

The protein belongs to the polyribonucleotide nucleotidyltransferase family. The cofactor is Mg(2+).

Its subcellular location is the cytoplasm. The enzyme catalyses RNA(n+1) + phosphate = RNA(n) + a ribonucleoside 5'-diphosphate. Functionally, involved in mRNA degradation. Catalyzes the phosphorolysis of single-stranded polyribonucleotides processively in the 3'- to 5'-direction. In Agrobacterium fabrum (strain C58 / ATCC 33970) (Agrobacterium tumefaciens (strain C58)), this protein is Polyribonucleotide nucleotidyltransferase.